Consider the following 122-residue polypeptide: Venom protein 7.1 (122 aa).

Residues 1 to 19 (MRFSIISASLVLIFANVKA) form the signal peptide.

Contains 3 disulfide bonds. In terms of tissue distribution, expressed by the venom gland.

Its subcellular location is the secreted. The polypeptide is Venom protein 7.1 (Lychas mucronatus (Chinese swimming scorpion)).